The chain runs to 283 residues: Diaminopimelate epimerase (283 aa).

Positions 13, 45, and 65 each coordinate substrate. Cys74 functions as the Proton donor in the catalytic mechanism. Substrate-binding positions include 75–76 (GN), Asn156, Asn190, and 208–209 (ER). The active-site Proton acceptor is the Cys217. 218–219 (GS) is a binding site for substrate.

The protein belongs to the diaminopimelate epimerase family. Homodimer.

It is found in the cytoplasm. The enzyme catalyses (2S,6S)-2,6-diaminopimelate = meso-2,6-diaminopimelate. Its pathway is amino-acid biosynthesis; L-lysine biosynthesis via DAP pathway; DL-2,6-diaminopimelate from LL-2,6-diaminopimelate: step 1/1. In terms of biological role, catalyzes the stereoinversion of LL-2,6-diaminopimelate (L,L-DAP) to meso-diaminopimelate (meso-DAP), a precursor of L-lysine and an essential component of the bacterial peptidoglycan. This Bartonella henselae (strain ATCC 49882 / DSM 28221 / CCUG 30454 / Houston 1) (Rochalimaea henselae) protein is Diaminopimelate epimerase.